We begin with the raw amino-acid sequence, 723 residues long: Polyribonucleotide nucleotidyltransferase (723 aa).

Positions 488 and 494 each coordinate Mg(2+). The KH domain maps to 555–614 (PKIITLNIKPEKIKDVIGPGGKQINAIIDETGVKIDIEQDGTVYIASQDQAMNRKAIAII). The region spanning 624–692 (GEVYTGKVRR…QQGRVNLSRK (69 aa)) is the S1 motif domain. A disordered region spans residues 692–723 (KALLEKKEQPEGDKKPQAEKKFYPKTKKPESK). Basic and acidic residues predominate over residues 693-723 (ALLEKKEQPEGDKKPQAEKKFYPKTKKPESK).

This sequence belongs to the polyribonucleotide nucleotidyltransferase family. It depends on Mg(2+) as a cofactor.

It localises to the cytoplasm. The catalysed reaction is RNA(n+1) + phosphate = RNA(n) + a ribonucleoside 5'-diphosphate. Involved in mRNA degradation. Catalyzes the phosphorolysis of single-stranded polyribonucleotides processively in the 3'- to 5'-direction. In Listeria monocytogenes serotype 4a (strain HCC23), this protein is Polyribonucleotide nucleotidyltransferase.